Here is an 88-residue protein sequence, read N- to C-terminus: Putative membrane protein insertion efficiency factor (88 aa).

Belongs to the UPF0161 family.

It is found in the cell inner membrane. Functionally, could be involved in insertion of integral membrane proteins into the membrane. The polypeptide is Putative membrane protein insertion efficiency factor (Prochlorococcus marinus (strain MIT 9313)).